The following is a 267-amino-acid chain: Regulatory protein RecX (267 aa).

This sequence belongs to the RecX family.

It is found in the cytoplasm. In terms of biological role, modulates RecA activity. The protein is Regulatory protein RecX of Leuconostoc mesenteroides subsp. mesenteroides (strain ATCC 8293 / DSM 20343 / BCRC 11652 / CCM 1803 / JCM 6124 / NCDO 523 / NBRC 100496 / NCIMB 8023 / NCTC 12954 / NRRL B-1118 / 37Y).